We begin with the raw amino-acid sequence, 247 residues long: ATP synthase subunit a, chloroplastic (247 aa).

5 consecutive transmembrane segments (helical) span residues Q38–V58, V95–L115, I134–S154, L199–L219, and G220–G240.

The protein belongs to the ATPase A chain family. As to quaternary structure, F-type ATPases have 2 components, CF(1) - the catalytic core - and CF(0) - the membrane proton channel. CF(1) has five subunits: alpha(3), beta(3), gamma(1), delta(1), epsilon(1). CF(0) has four main subunits: a, b, b' and c.

The protein resides in the plastid. The protein localises to the chloroplast thylakoid membrane. In terms of biological role, key component of the proton channel; it plays a direct role in the translocation of protons across the membrane. This is ATP synthase subunit a, chloroplastic from Oryza sativa subsp. indica (Rice).